The chain runs to 288 residues: Oxaloacetate decarboxylase (288 aa).

Position 47 (Ser-47) interacts with substrate. Asp-85 is a binding site for Mg(2+). Residues Arg-156 and His-232 each coordinate substrate.

The protein belongs to the isocitrate lyase/PEP mutase superfamily. Oxaloacetate decarboxylase family. In terms of assembly, homotetramer; dimer of dimers. Mg(2+) is required as a cofactor.

It catalyses the reaction oxaloacetate + H(+) = pyruvate + CO2. Catalyzes the decarboxylation of oxaloacetate into pyruvate. Seems to play a role in maintaining cellular concentrations of bicarbonate and pyruvate. In Rhodopseudomonas palustris (strain TIE-1), this protein is Oxaloacetate decarboxylase.